The following is a 200-amino-acid chain: Recombination protein RecR (200 aa).

Residues C57 to C72 form a C4-type zinc finger. Residues T80 to P175 enclose the Toprim domain.

Belongs to the RecR family.

Its function is as follows. May play a role in DNA repair. It seems to be involved in an RecBC-independent recombinational process of DNA repair. It may act with RecF and RecO. This Pseudomonas syringae pv. tomato (strain ATCC BAA-871 / DC3000) protein is Recombination protein RecR.